Reading from the N-terminus, the 204-residue chain is Proteasome subunit beta 1 (204 aa).

A propeptide spans 1–9 (MSYEYGTGA) (removed in mature form; by autocatalysis). Residue Thr-10 is the Nucleophile of the active site.

The protein belongs to the peptidase T1B family. The 20S proteasome core is composed of 14 alpha and 14 beta subunits that assemble into four stacked heptameric rings, resulting in a barrel-shaped structure. The two inner rings, each composed of seven catalytic beta subunits, are sandwiched by two outer rings, each composed of seven alpha subunits. The catalytic chamber with the active sites is on the inside of the barrel. Has a gated structure, the ends of the cylinder being occluded by the N-termini of the alpha-subunits. Is capped at one or both ends by the proteasome regulatory ATPase, PAN.

It localises to the cytoplasm. The enzyme catalyses Cleavage of peptide bonds with very broad specificity.. Its activity is regulated as follows. The formation of the proteasomal ATPase PAN-20S proteasome complex, via the docking of the C-termini of PAN into the intersubunit pockets in the alpha-rings, triggers opening of the gate for substrate entry. Interconversion between the open-gate and close-gate conformations leads to a dynamic regulation of the 20S proteasome proteolysis activity. Functionally, component of the proteasome core, a large protease complex with broad specificity involved in protein degradation. The chain is Proteasome subunit beta 1 from Hyperthermus butylicus (strain DSM 5456 / JCM 9403 / PLM1-5).